The following is a 424-amino-acid chain: Sulfatase ppz1 (424 aa).

Ca(2+)-binding residues include aspartate 13, aspartate 203, and asparagine 204.

This sequence belongs to the sulfatase family. Ca(2+) serves as cofactor.

Its function is as follows. Sulfatase; part of the gene cluster that mediates the biosynthesis of pyrrolopyrazines, secondary metabolites showing insecticidal activity. The role of ppz1 within the pathway has still to be determined. The single multifunctional NRPS ppzA is sufficient to produce peramine via condensation of 1-pyrroline-5-carboxylate and arginine, N-methylation of the alpha-amino group of arginine and reduction of the thioester and the cyclization to form an iminium ion resulting in release from the peptide synthetase. Deprotonation of this intermediate and oxidation of the pyrroline ring would give rise to peramine. In Epichloe species that produce only peramine, the peramine synthetase gene is not localized in a gene cluster, in contrast to Metarhizium species that contain additional pyrrolopyrazine biosynthesis genes. The 2-oxoglutarate-Fe(II) type oxidoreductase ppzC hydroxylates peramine to yield the newly identified compound 8-hydroxyperamine whereas ppzD converts L-proline into trans-4-hydroxy-L-proline, a precursor of peramine biosynthesis. This chain is Sulfatase ppz1, found in Metarhizium majus (strain ARSEF 297).